The following is a 359-amino-acid chain: 5-amino-6-(D-ribitylamino)uracil--L-tyrosine 4-hydroxyphenyl transferase (359 aa).

The Radical SAM core domain maps to 45–282; it reads VTYVVNANIN…TYAVSRIFFK (238 aa). Residues cysteine 59, cysteine 63, and cysteine 66 each coordinate [4Fe-4S] cluster.

The protein belongs to the radical SAM superfamily. CofH family. Consists of two subunits, CofG and CofH. The cofactor is [4Fe-4S] cluster.

It catalyses the reaction 5-amino-6-(D-ribitylamino)uracil + L-tyrosine + S-adenosyl-L-methionine = 5-amino-5-(4-hydroxybenzyl)-6-(D-ribitylimino)-5,6-dihydrouracil + 2-iminoacetate + 5'-deoxyadenosine + L-methionine + H(+). It participates in cofactor biosynthesis; coenzyme F0 biosynthesis. Catalyzes the radical-mediated synthesis of 5-amino-5-(4-hydroxybenzyl)-6-(D-ribitylimino)-5,6-dihydrouracil from 5-amino-6-(D-ribitylamino)uracil and L-tyrosine. The sequence is that of 5-amino-6-(D-ribitylamino)uracil--L-tyrosine 4-hydroxyphenyl transferase from Methanococcus maripaludis (strain C6 / ATCC BAA-1332).